Reading from the N-terminus, the 253-residue chain is REF/SRPP-like protein OsI_017815 (253 aa).

A disordered region spans residues 1–26 (MADSGSDAPISNRPEEEVTVEKTPEM). Basic and acidic residues predominate over residues 13–26 (RPEEEVTVEKTPEM).

It belongs to the REF/SRPP family.

The polypeptide is REF/SRPP-like protein OsI_017815 (Oryza sativa subsp. indica (Rice)).